A 310-amino-acid chain; its full sequence is tRNA uridine(34) hydroxylase (310 aa).

A Rhodanese domain is found at 124–218 (SDPEVLLIDT…YFEEVAQEES (95 aa)). Cysteine 178 (cysteine persulfide intermediate) is an active-site residue.

This sequence belongs to the TrhO family.

The catalysed reaction is uridine(34) in tRNA + AH2 + O2 = 5-hydroxyuridine(34) in tRNA + A + H2O. Its function is as follows. Catalyzes oxygen-dependent 5-hydroxyuridine (ho5U) modification at position 34 in tRNAs. In Pseudomonas entomophila (strain L48), this protein is tRNA uridine(34) hydroxylase.